Reading from the N-terminus, the 89-residue chain is Large ribosomal subunit protein uL23c (89 aa).

It belongs to the universal ribosomal protein uL23 family. In terms of assembly, part of the 50S ribosomal subunit.

The protein localises to the plastid. Its subcellular location is the chloroplast. Its function is as follows. Binds to 23S rRNA. The protein is Large ribosomal subunit protein uL23c (rpl23) of Zygnema circumcarinatum (Green alga).